The primary structure comprises 290 residues: Endoplasmic reticulum-Golgi intermediate compartment protein 1 (290 aa).

The Cytoplasmic portion of the chain corresponds to 1 to 26 (MPFDFRRFDIYRKVPKDLTQPTYTGA). Residues 27–47 (IISICCCLFILFLFLSELTGF) form a helical membrane-spanning segment. Over 48-254 (ITTEVVNELY…RRQPLYRFIT (207 aa)) the chain is Lumenal. Asparagine 74 carries N-linked (GlcNAc...) asparagine glycosylation. A helical membrane pass occupies residues 255–275 (TICAIIGGTFTVAGILDSCIF). At 276–290 (TASEAWKKIQLGKIH) the chain is on the cytoplasmic side.

The protein belongs to the ERGIC family. In terms of assembly, may form a heteromeric complex composed of ERGIC1, ERGIC2 and ERGIC3. Within the complex, the interaction with ERGIC3 is direct. Interacts with ERGIC3/ERV46. Post-translationally, N-glycosylated.

It is found in the endoplasmic reticulum membrane. The protein localises to the endoplasmic reticulum-Golgi intermediate compartment membrane. The protein resides in the golgi apparatus membrane. Possible role in transport between endoplasmic reticulum and Golgi. The polypeptide is Endoplasmic reticulum-Golgi intermediate compartment protein 1 (Ergic1) (Mus musculus (Mouse)).